The following is a 247-amino-acid chain: Geranylgeranylglyceryl phosphate synthase (247 aa).

Mg(2+) contacts are provided by Asp-23 and Ser-52. Residues 171-177 (YLEAGSG), 203-204 (GG), and 225-226 (GT) each bind sn-glycerol 1-phosphate.

Belongs to the GGGP/HepGP synthase family. Group II subfamily. Mg(2+) is required as a cofactor.

The protein localises to the cytoplasm. It carries out the reaction sn-glycerol 1-phosphate + (2E,6E,10E)-geranylgeranyl diphosphate = sn-3-O-(geranylgeranyl)glycerol 1-phosphate + diphosphate. The protein operates within membrane lipid metabolism; glycerophospholipid metabolism. Its function is as follows. Prenyltransferase that catalyzes the transfer of the geranylgeranyl moiety of geranylgeranyl diphosphate (GGPP) to the C3 hydroxyl of sn-glycerol-1-phosphate (G1P). This reaction is the first ether-bond-formation step in the biosynthesis of archaeal membrane lipids. This is Geranylgeranylglyceryl phosphate synthase from Methanosarcina mazei (strain ATCC BAA-159 / DSM 3647 / Goe1 / Go1 / JCM 11833 / OCM 88) (Methanosarcina frisia).